Here is a 678-residue protein sequence, read N- to C-terminus: RAS guanyl-releasing protein 4 (678 aa).

2 stretches are compositionally biased toward basic residues: residues 1–10 and 20–32; these read MNRKDIKRKS and GHGRPRQARRHKT. 2 disordered regions span residues 1 to 33 and 165 to 185; these read MNRKDIKRKSHQECSGKAGGHGRPRQARRHKTC and GDASNLLSPGGPGPPPLMSSP. Residues 49–175 enclose the N-terminal Ras-GEF domain; sequence GVLSESSCSV…DASNLLSPGG (127 aa). One can recognise a Ras-GEF domain in the interval 201 to 432; it reads ETEELAQHLT…YELSYAREPR (232 aa). Residues 466-501 enclose the EF-hand domain; the sequence is HVEQLVESVFKNYDPEGHGSISLEDFEKLSANFPFA. A Phorbol-ester/DAG-type zinc finger spans residues 540 to 595; the sequence is LHAFQEVTFRKPTFCHSCNGFVSTGPLWGVTKRGYRCQDCGLCCHRHCRDQVRVEC. 2 disordered regions span residues 598 to 620 and 651 to 678; these read RPETKGDPGPPGAPGPATPLPPT and SSHSSWEPEMVPCPAPVLPSKASSKSSV. Over residues 605–619 the composition is skewed to pro residues; that stretch reads PGPPGAPGPATPLPP.

Belongs to the RASGRP family. In terms of tissue distribution, expressed by mast cells and their progenitors (at protein level).

Its subcellular location is the cytoplasm. It is found in the cell membrane. Functionally, functions as a cation- and diacylglycerol (DAG)-regulated nucleotide exchange factor activating Ras through the exchange of bound GDP for GTP. In neutrophils, participates in a phospholipase C-activating N-formyl peptide-activated GPCR (G protein-coupled receptor) signaling pathway by promoting Ras-mediated activation of PIK3CG/PI3Kgamma to promote neutrophil functional responses. In CD117(+) dendritic cells and mast cells, participates in an lipopolysaccharide (LPS)-activated signaling pathway that stimulates the production of interferon-gamma and other pro-inflammatory cytokines by natural killer (NK) cells. May function in mast cell differentiation. Does not appear to be required for the development of B-cells, DC-cells, T-cells, or NK-cells. The protein is RAS guanyl-releasing protein 4 (Rasgrp4) of Rattus norvegicus (Rat).